The sequence spans 512 residues: Putative UDP-glucuronosyltransferase ugt-55 (512 aa).

Positions 1–22 (MQLLTLPTLIFIFLNYGTPCLS) are cleaved as a signal peptide. A helical transmembrane segment spans residues 487–507 (ILLYLDSIAMFTLTLLTMILI).

It belongs to the UDP-glycosyltransferase family.

The protein localises to the membrane. The enzyme catalyses glucuronate acceptor + UDP-alpha-D-glucuronate = acceptor beta-D-glucuronoside + UDP + H(+). The chain is Putative UDP-glucuronosyltransferase ugt-55 (ugt-55) from Caenorhabditis elegans.